We begin with the raw amino-acid sequence, 38 residues long: Potassium channel toxin alpha-KTx 3.8 (38 aa).

3 disulfides stabilise this stretch: cysteine 8/cysteine 28, cysteine 14/cysteine 33, and cysteine 18/cysteine 35. The tract at residues 26-33 (GKCMNGKC) is interaction with Ca(2+)-activated K(+) channels.

Expressed by the venom gland.

It localises to the secreted. Its function is as follows. Potassium channel inhibitor. The protein is Potassium channel toxin alpha-KTx 3.8 of Hottentotta tamulus sindicus (Scorpion).